The chain runs to 272 residues: Hydroxyethylthiazole kinase (272 aa).

A substrate-binding site is contributed by Met62. Arg138 and Thr183 together coordinate ATP. Gly210 is a substrate binding site.

It belongs to the Thz kinase family. Mg(2+) is required as a cofactor.

It catalyses the reaction 5-(2-hydroxyethyl)-4-methylthiazole + ATP = 4-methyl-5-(2-phosphooxyethyl)-thiazole + ADP + H(+). Its pathway is cofactor biosynthesis; thiamine diphosphate biosynthesis; 4-methyl-5-(2-phosphoethyl)-thiazole from 5-(2-hydroxyethyl)-4-methylthiazole: step 1/1. Catalyzes the phosphorylation of the hydroxyl group of 4-methyl-5-beta-hydroxyethylthiazole (THZ). This Dichelobacter nodosus (strain VCS1703A) protein is Hydroxyethylthiazole kinase.